The chain runs to 183 residues: uncharacterized protein (183 aa).

The disordered stretch occupies residues 1 to 36 (MAKRGNKKKQEAPLSLGKHTVGGRVGKPTNAKTGSA). In terms of domain architecture, RRM spans 100–174 (TNVVIENLAP…FKLSCYIKKN (75 aa)).

It localises to the nucleus. Its subcellular location is the nucleolus. This is an uncharacterized protein from Schizosaccharomyces pombe (strain 972 / ATCC 24843) (Fission yeast).